A 111-amino-acid chain; its full sequence is Putative ciliary rootlet coiled-coil protein-like 1 protein (111 aa).

The stretch at 21-86 forms a coiled coil; the sequence is MELELSVTKL…RQAEQEATVA (66 aa).

The protein belongs to the rootletin family.

The polypeptide is Putative ciliary rootlet coiled-coil protein-like 1 protein (CROCCP2) (Homo sapiens (Human)).